The primary structure comprises 127 residues: Major sperm protein isoform alpha (127 aa).

A2 carries the N-acetylalanine modification. One can recognise an MSP domain in the interval 9-126 (DINTQPSQKI…RRKNLPIEYN (118 aa)).

As to quaternary structure, forms filaments 10 nm wide, with a characteristic substructure repeating axially at 9 nm. Sperm.

Its subcellular location is the cell projection. The protein resides in the pseudopodium. It localises to the cytoplasm. It is found in the cytoskeleton. Functionally, central component in molecular interactions underlying sperm crawling. Forms an extensive filament system that extends from sperm villipoda, along the leading edge of the pseudopod. This Ascaris suum (Pig roundworm) protein is Major sperm protein isoform alpha.